Reading from the N-terminus, the 317-residue chain is uncharacterized protein (317 aa).

At 1–13 (MKRVTGVFLTLLR) the chain is on the cytoplasmic side. The chain crosses the membrane as a helical span at residues 14 to 34 (FSQFASSVLVMSLLAYAIHAY). Residues 35–49 (GNRGNKKTNFTLATG) lie on the Extracellular side of the membrane. The N-linked (GlcNAc...) asparagine glycan is linked to Asn43. Residues 50 to 70 (VISVFYLIALGILCLALPTLI) traverse the membrane as a helical segment. A topological domain (cytoplasmic) is located at residue Tyr71. A helical membrane pass occupies residues 72–92 (IGMYFCAELIVCMLWLAAFVV). Topologically, residues 93–133 (LAKAQGERSCSNTNADGLYYNPYSGQYTADSHRRACNSSQA) are extracellular. The N-linked (GlcNAc...) asparagine glycan is linked to Asn129. Residues 134–154 (AIAFSGLCFVLFLISVILLGI) form a helical membrane-spanning segment. The Cytoplasmic portion of the chain corresponds to 155–317 (NVLTPIRKRY…EPNRNVNQMP (163 aa)). Residues 204 to 317 (RTGDVEAGAG…EPNRNVNQMP (114 aa)) are disordered. Positions 239 to 250 (TTTTNTRYTTTT) are enriched in low complexity. Polar residues predominate over residues 256–282 (RYTTNDRNPGSANVANSAVDQHAYSTD). Positions 284–295 (SGDRSYQEKVTE) are enriched in basic and acidic residues. A compositionally biased stretch (polar residues) spans 302-317 (MSGSTAEPNRNVNQMP).

Its subcellular location is the membrane. This is an uncharacterized protein from Saccharomyces cerevisiae (strain ATCC 204508 / S288c) (Baker's yeast).